Reading from the N-terminus, the 351-residue chain is Phospho-N-acetylmuramoyl-pentapeptide-transferase (351 aa).

The next 10 helical transmembrane spans lie at 17–37, 62–82, 85–105, 130–150, 158–178, 190–210, 230–250, 254–274, 279–299, and 328–348; these read MAYATIFAFLLSLIVGPYIIL, GIPTMGGILIFFCVFISLVFW, ILNVYFLIMVFVMLGFAFLGF, IIFSFFSVGILYYFGGEHVSV, SFQIDLGLFYIPFGMFILISA, GLAIGLSIVITGALIIIAYLT, LVIFLGALLGGSFGFLWFNAY, IMMGDTGSLALGAILGMAALI, ILFSILAGVFIIETMSVIIQV, and QVVIRFWIIGLIFAIIALSTI.

The protein belongs to the glycosyltransferase 4 family. MraY subfamily. Mg(2+) serves as cofactor.

The protein localises to the cell inner membrane. It carries out the reaction UDP-N-acetyl-alpha-D-muramoyl-L-alanyl-gamma-D-glutamyl-meso-2,6-diaminopimeloyl-D-alanyl-D-alanine + di-trans,octa-cis-undecaprenyl phosphate = di-trans,octa-cis-undecaprenyl diphospho-N-acetyl-alpha-D-muramoyl-L-alanyl-D-glutamyl-meso-2,6-diaminopimeloyl-D-alanyl-D-alanine + UMP. It functions in the pathway cell wall biogenesis; peptidoglycan biosynthesis. In terms of biological role, catalyzes the initial step of the lipid cycle reactions in the biosynthesis of the cell wall peptidoglycan: transfers peptidoglycan precursor phospho-MurNAc-pentapeptide from UDP-MurNAc-pentapeptide onto the lipid carrier undecaprenyl phosphate, yielding undecaprenyl-pyrophosphoryl-MurNAc-pentapeptide, known as lipid I. This chain is Phospho-N-acetylmuramoyl-pentapeptide-transferase, found in Borreliella burgdorferi (strain ATCC 35210 / DSM 4680 / CIP 102532 / B31) (Borrelia burgdorferi).